The primary structure comprises 34 residues: Beta/mu-theraphotoxin-Pe1a (34 aa).

Cystine bridges form between cysteine 2/cysteine 16, cysteine 9/cysteine 21, and cysteine 15/cysteine 28.

This sequence belongs to the neurotoxin 10 (Hwtx-1) family. 54 (ProTx-1) subfamily. As to expression, expressed by the venom gland.

It localises to the secreted. Ion channel impairing toxin that inhibits voltage-gated sodium channels. The recombinantly expressed toxin shows a weak activity against Nav1.7/SCN9A (25% inhibition at 10 uM), and shifts the voltage dependence of channel activation to more depolarized potentials. This chain is Beta/mu-theraphotoxin-Pe1a, found in Phormingochilus everetti (Malaysian purple earth tiger tarantula).